The sequence spans 690 residues: Signal peptide peptidase-like 2C (690 aa).

Residues 1–28 (MACLGSLHPLGSLLLLFLLLLLSPEARG) form the signal peptide. Residues 29–192 (EYGLVRVVSK…APLEPVTDYN (164 aa)) are Lumenal-facing. The 80-residue stretch at 87-166 (DSSPRQRPLH…AVLRYTDMLD (80 aa)) folds into the PA domain. N106 carries an N-linked (GlcNAc...) asparagine glycan. Residues 193-213 (MAIIFILAVGTVAAGGYWAGL) form a helical membrane-spanning segment. At 214–260 (MEANKLQRRQAQRGGGLGGHNQQQTVAAERSQRAWEDDDFEDAPMDF) the chain is on the cytoplasmic side. Residues 261 to 283 (TPAMTGAVVTMSCSIMILLYFFY) form a helical membrane-spanning segment. A topological domain (lumenal) is located at residue D284. The chain crosses the membrane as a helical span at residues 285–307 (CFVYVMIGIFSLGASTGLYSCLA). At 308–328 (PILCHLPLWRYQWVLPGQRVS) the chain is on the cytoplasmic side. A helical membrane pass occupies residues 329 to 349 (VTWPLLLLAGLCAMVTVLWVI). At 350–354 (HRNED) the chain is on the lumenal side. A helical membrane pass occupies residues 355–373 (HWAWLLQDTLGVAYCLFVL). Topologically, residues 374-384 (RRVRLPTFKNC) are cytoplasmic. The chain crosses the membrane as a helical span at residues 385-405 (TLFLLALLAFDVFFVFITPLF). The active site involves D395. The Lumenal segment spans residues 406–448 (TKTGESIMVEVASGPADSSSHERLPMVLKVPRLSFSALTLCNQ). The helical transmembrane segment at 449–469 (PFSILGFGDIVVPGFLVAYCH) threads the bilayer. The active site involves D457. The Cytoplasmic portion of the chain corresponds to 470–482 (RFDMQVQSRQVYY). The helical transmembrane segment at 483–503 (MACTVAYAVGLLVTFVAMILM) threads the bilayer. Residue Q504 is a topological domain, lumenal. Residues 505-525 (MGQPALLYLVSSTLLTSLAVA) form a helical membrane-spanning segment. The PAL signature appears at 508 to 510 (PAL). The Cytoplasmic portion of the chain corresponds to 526 to 690 (TCRQEFTLFW…KKSMSAQAPL (165 aa)). Residues 564 to 573 (EDAKDSRTTN) show a composition bias toward basic and acidic residues. The tract at residues 564 to 633 (EDAKDSRTTN…DPNELPSGSP (70 aa)) is disordered. Over residues 615–624 (SEGWSDTNLD) the composition is skewed to polar residues.

Belongs to the peptidase A22B family. In terms of assembly, interacts (via active sites) with FREY; the interaction stabilizes FREY1 protein and inhibits SPPL2C proteolytic activity. Post-translationally, glycosylated. As to expression, highly expressed in testis where it is primarily localised in spermatids (at protein level).

The protein localises to the endoplasmic reticulum membrane. Its function is as follows. Sperm-specific intramembrane-cleaving aspartic protease (I-CLiP) that cleaves distinct tail-anchored proteins and SNARE proteins. In elongated spermatids, modulates intracellular Ca(2+) homeostasis by controlling PLN abundance through proteolytic cleavage. During spermatogenesis, processes SNARE proteins and impacts vesicular trafficking which supports compartmental reorganization in maturating spermatids and may play a role in formation of the acrosome. Functionally, in round spermatids, acts as a scaffold protein supporting FREY1 in IZUMO1 recruitment at the endoplasmic reticulum membrane and coordination of IZUMO1 complex assembly. Stabilizes FREY1 at the endoplasmic reticulum membrane through interaction. May recruit IZUMO1 interaction partners. No difference in cleavage specificity compared to isoform 1. This Mus musculus (Mouse) protein is Signal peptide peptidase-like 2C.